Reading from the N-terminus, the 364-residue chain is Lipoyl synthase, mitochondrial (364 aa).

The disordered stretch occupies residues P34–Y53. [4Fe-4S] cluster contacts are provided by C99, C104, C110, C130, C134, C137, and S345. In terms of domain architecture, Radical SAM core spans E115 to L334.

This sequence belongs to the radical SAM superfamily. Lipoyl synthase family. Requires [4Fe-4S] cluster as cofactor.

The protein localises to the mitochondrion. The enzyme catalyses [[Fe-S] cluster scaffold protein carrying a second [4Fe-4S](2+) cluster] + N(6)-octanoyl-L-lysyl-[protein] + 2 oxidized [2Fe-2S]-[ferredoxin] + 2 S-adenosyl-L-methionine + 4 H(+) = [[Fe-S] cluster scaffold protein] + N(6)-[(R)-dihydrolipoyl]-L-lysyl-[protein] + 4 Fe(3+) + 2 hydrogen sulfide + 2 5'-deoxyadenosine + 2 L-methionine + 2 reduced [2Fe-2S]-[ferredoxin]. It participates in protein modification; protein lipoylation via endogenous pathway; protein N(6)-(lipoyl)lysine from octanoyl-[acyl-carrier-protein]: step 2/2. In terms of biological role, catalyzes the radical-mediated insertion of two sulfur atoms into the C-6 and C-8 positions of the octanoyl moiety bound to the lipoyl domains of lipoate-dependent enzymes, thereby converting the octanoylated domains into lipoylated derivatives. The chain is Lipoyl synthase, mitochondrial from Drosophila grimshawi (Hawaiian fruit fly).